The following is a 429-amino-acid chain: Enolase (429 aa).

Residue Q165 coordinates (2R)-2-phosphoglycerate. E207 acts as the Proton donor in catalysis. Positions 244, 287, and 314 each coordinate Mg(2+). The (2R)-2-phosphoglycerate site is built by K339, R368, S369, and K390. K339 serves as the catalytic Proton acceptor.

The protein belongs to the enolase family. Mg(2+) is required as a cofactor.

Its subcellular location is the cytoplasm. It is found in the secreted. It localises to the cell surface. The enzyme catalyses (2R)-2-phosphoglycerate = phosphoenolpyruvate + H2O. Its pathway is carbohydrate degradation; glycolysis; pyruvate from D-glyceraldehyde 3-phosphate: step 4/5. Functionally, catalyzes the reversible conversion of 2-phosphoglycerate (2-PG) into phosphoenolpyruvate (PEP). It is essential for the degradation of carbohydrates via glycolysis. This chain is Enolase, found in Roseiflexus castenholzii (strain DSM 13941 / HLO8).